The primary structure comprises 203 residues: Imidazoleglycerol-phosphate dehydratase (203 aa).

It belongs to the imidazoleglycerol-phosphate dehydratase family.

It is found in the cytoplasm. The catalysed reaction is D-erythro-1-(imidazol-4-yl)glycerol 3-phosphate = 3-(imidazol-4-yl)-2-oxopropyl phosphate + H2O. The protein operates within amino-acid biosynthesis; L-histidine biosynthesis; L-histidine from 5-phospho-alpha-D-ribose 1-diphosphate: step 6/9. This Salinispora tropica (strain ATCC BAA-916 / DSM 44818 / JCM 13857 / NBRC 105044 / CNB-440) protein is Imidazoleglycerol-phosphate dehydratase.